The following is a 143-amino-acid chain: 5-hydroxymethyl-dUMP N-hydrolase (143 aa).

5-hydroxymethyl-dUMP-binding residues include glycine 7, isoleucine 9, arginine 10, glycine 11, serine 77, glycine 79, glutamate 83, and serine 107.

This sequence belongs to the 2'-deoxynucleoside 5'-phosphate N-hydrolase 1 family. In terms of assembly, monomer and homodimer.

Its subcellular location is the cytoplasm. It localises to the nucleus. It catalyses the reaction 5-hydroxymethyl-dUMP + H2O = 5-hydroxymethyluracil + 2-deoxy-D-ribose 5-phosphate. Its function is as follows. Part of a nucleotide salvage pathway that eliminates epigenetically modified 5-hydroxymethyl-dCMP (hmdCMP) in a two-step process entailing deamination to cytotoxic 5-hydroxymethyl-dUMP (hmdUMP), followed by its hydrolysis into 5-hydroxymethyluracil (hmU) and 2-deoxy-D-ribose 5-phosphate (deoxyribosephosphate). This chain is 5-hydroxymethyl-dUMP N-hydrolase (dnph1), found in Danio rerio (Zebrafish).